The primary structure comprises 316 residues: 4-hydroxy-3-methylbut-2-enyl diphosphate reductase (316 aa).

Cysteine 12 is a [4Fe-4S] cluster binding site. Residues histidine 41 and histidine 74 each coordinate (2E)-4-hydroxy-3-methylbut-2-enyl diphosphate. Residues histidine 41 and histidine 74 each coordinate dimethylallyl diphosphate. Positions 41 and 74 each coordinate isopentenyl diphosphate. Cysteine 96 is a binding site for [4Fe-4S] cluster. A (2E)-4-hydroxy-3-methylbut-2-enyl diphosphate-binding site is contributed by histidine 124. Position 124 (histidine 124) interacts with dimethylallyl diphosphate. Position 124 (histidine 124) interacts with isopentenyl diphosphate. The active-site Proton donor is the glutamate 126. Position 169 (threonine 169) interacts with (2E)-4-hydroxy-3-methylbut-2-enyl diphosphate. [4Fe-4S] cluster is bound at residue cysteine 199. Positions 227, 228, 229, and 271 each coordinate (2E)-4-hydroxy-3-methylbut-2-enyl diphosphate. Positions 227, 228, 229, and 271 each coordinate dimethylallyl diphosphate. Residues serine 227, serine 228, asparagine 229, and serine 271 each contribute to the isopentenyl diphosphate site.

Belongs to the IspH family. [4Fe-4S] cluster serves as cofactor.

It carries out the reaction isopentenyl diphosphate + 2 oxidized [2Fe-2S]-[ferredoxin] + H2O = (2E)-4-hydroxy-3-methylbut-2-enyl diphosphate + 2 reduced [2Fe-2S]-[ferredoxin] + 2 H(+). The catalysed reaction is dimethylallyl diphosphate + 2 oxidized [2Fe-2S]-[ferredoxin] + H2O = (2E)-4-hydroxy-3-methylbut-2-enyl diphosphate + 2 reduced [2Fe-2S]-[ferredoxin] + 2 H(+). Its pathway is isoprenoid biosynthesis; dimethylallyl diphosphate biosynthesis; dimethylallyl diphosphate from (2E)-4-hydroxy-3-methylbutenyl diphosphate: step 1/1. It participates in isoprenoid biosynthesis; isopentenyl diphosphate biosynthesis via DXP pathway; isopentenyl diphosphate from 1-deoxy-D-xylulose 5-phosphate: step 6/6. Its function is as follows. Catalyzes the conversion of 1-hydroxy-2-methyl-2-(E)-butenyl 4-diphosphate (HMBPP) into a mixture of isopentenyl diphosphate (IPP) and dimethylallyl diphosphate (DMAPP). Acts in the terminal step of the DOXP/MEP pathway for isoprenoid precursor biosynthesis. The protein is 4-hydroxy-3-methylbut-2-enyl diphosphate reductase of Xanthomonas campestris pv. campestris (strain 8004).